The chain runs to 65 residues: Stress-associated endoplasmic reticulum protein 2 (65 aa).

Residues 38-58 (GPWLLALFVFVVCGSAIFQII) traverse the membrane as a helical segment.

Belongs to the RAMP4 family. Interacts with SEC61B, SEC61A1 and the SEC61 complex. Interacts with CANX.

It localises to the membrane. Its subcellular location is the endoplasmic reticulum membrane. Functionally, interacts with target proteins during their translocation into the lumen of the endoplasmic reticulum. Protects unfolded target proteins against degradation during ER stress. May facilitate glycosylation of target proteins after termination of ER stress. May modulate the use of N-glycosylation sites on target proteins. This is Stress-associated endoplasmic reticulum protein 2 (SERP2) from Bos taurus (Bovine).